We begin with the raw amino-acid sequence, 76 residues long: Rhesus theta defensin-1/2 subunit B (76 aa).

The signal sequence occupies residues 1–22 (MRTFALLTAMLLLVALHAQAEA). The propeptide occupies 23–64 (RQARADEAAAQQQPGADDQGMAHSFTRPENAALPLSESARGL). Residues 25–54 (ARADEAAAQQQPGADDQGMAHSFTRPENAA) are disordered. Residues 30–44 (AAAQQQPGADDQGMA) are compositionally biased toward low complexity. Residue Arg-65 forms a Cyclopeptide (Arg-Cys) (interchain with C-73 in subunit A); in form RTD-1 linkage. Residue Arg-65 forms a Cyclopeptide (Arg-Cys) (interchain with C-73 in subunit B); in form RTD-2 linkage. A disulfide bridge connects residues Cys-68 and Cys-73. Residue Cys-73 forms a Cyclopeptide (Cys-Arg) (interchain with R-65 in subunit A); in form RTD-1 linkage. Residue Cys-73 forms a Cyclopeptide (Cys-Arg) (interchain with R-65 in subunit B); in form RTD-2 linkage. Positions 74–76 (QLL) are excised as a propeptide.

The protein belongs to the alpha-defensin family. Theta subfamily. RTD-1 is a cyclic heterodimer composed of subunits A and B; disulfide-linked. RTD-2 is a cyclic homodimer composed of two subunits B; disulfide-linked. Forms a cyclic peptide with 1 subunit B (RTD-2) or with 1 subunit A (RTD-1). An additional intersubunit disulfide bond is formed. In terms of tissue distribution, RTD-1 is expressed in bone marrow. Detected in promyelocytes, myelocytes and mature neutrophils and monocytes.

RTD-1 and RTD-2 have similar antimicrobial activities against the Gram-positive bacteria S.aureus 502A and L.monocytogenes, the Gram-negative bacterium S.typhimurium, and the fungi C.albicans 16820 and C.neoformans 271A. RTD-2 is 2-3-fold less active than RTD-1 against E.coli ML35. This Macaca mulatta (Rhesus macaque) protein is Rhesus theta defensin-1/2 subunit B (RTD1B).